Consider the following 488-residue polypeptide: Probable 26S proteasome non-ATPase regulatory subunit 3 (488 aa).

A disordered region spans residues 1 to 20 (MTQDVEMKEQAAPPSNSLSS). In terms of domain architecture, PCI spans 240–421 (SRYLFYLGKI…GWMVSKETGD (182 aa)). The segment at 452-488 (FPPNSHKEKESAEKRRERQQQEQELAKHIAEEDDDDF) is disordered. Positions 456–481 (SHKEKESAEKRRERQQQEQELAKHIA) are enriched in basic and acidic residues.

Belongs to the proteasome subunit S3 family. In terms of assembly, the 26S proteasome is composed of a core protease, known as the 20S proteasome, capped at one or both ends by the 19S regulatory complex (RC). The RC is composed of at least 18 different subunits in two subcomplexes, the base and the lid, which form the portions proximal and distal to the 20S proteolytic core, respectively.

The protein localises to the nucleus. In terms of biological role, acts as a regulatory subunit of the 26 proteasome which is involved in the ATP-dependent degradation of ubiquitinated proteins. The chain is Probable 26S proteasome non-ATPase regulatory subunit 3 (21D7) from Nicotiana tabacum (Common tobacco).